A 269-amino-acid polypeptide reads, in one-letter code: Meiotic drive suppressor wtf5 (269 aa).

Residues 1 to 65 (MKNNYTSLKS…NTHRENHSYG (65 aa)) are disordered. The segment covering 19-30 (KTDHEIDLEKGP) has biased composition (basic and acidic residues). The next 3 membrane-spanning stretches (helical) occupy residues 73–95 (LLIILLISFTSIILFNAPEVCYL), 110–132 (WTLFGFWCLVCTLALIFLTYFYE), and 206–228 (WGLKCSLADHIIFVVLSILVFIA).

It belongs to the WTF family. Homomer. Interacts with other proteins that exhibit high sequence similarity.

Its subcellular location is the spore membrane. The protein localises to the vacuole membrane. Functionally, acts as a suppressor component of the dual wtf meiotic drive system, and can suppress but not confer meiotic drive by compatible poisons. Wtf meiotic drive systems promote unequal transmission of alleles from the parental zygote to progeny spores by encoding a poison and an antidote from the same locus; the poison is trans-acting and forms toxic aggregates in all spores within an ascus, wherease the antidote is spore-specific and targets aggregates for degradation by the vacuole. Meiotic drive by wtf systems therefore lead to poisoning of all progeny that do not inherit the dual poison/antidote allele, or express a compatible antidote. In Schizosaccharomyces pombe (strain 972 / ATCC 24843) (Fission yeast), this protein is Meiotic drive suppressor wtf5.